The sequence spans 90 residues: uncharacterized protein (90 aa).

An N-terminal signal peptide occupies residues 1–20 (MEKLFVLVFALALLAFSSDA).

The protein resides in the secreted. This is an uncharacterized protein from Mus musculus (Mouse).